A 226-amino-acid chain; its full sequence is Orotate phosphoribosyltransferase (226 aa).

Lysine 30 is a 5-phospho-alpha-D-ribose 1-diphosphate binding site. Residue 38–39 (FF) participates in orotate binding. 5-phospho-alpha-D-ribose 1-diphosphate contacts are provided by residues 76–77 (YK), arginine 106, lysine 107, lysine 110, histidine 112, and 132–140 (DDVMTAGTA). Orotate is bound by residues threonine 136 and arginine 164.

Belongs to the purine/pyrimidine phosphoribosyltransferase family. PyrE subfamily. Homodimer.

It catalyses the reaction orotidine 5'-phosphate + diphosphate = orotate + 5-phospho-alpha-D-ribose 1-diphosphate. It functions in the pathway pyrimidine metabolism; UMP biosynthesis via de novo pathway; UMP from orotate: step 1/2. In terms of biological role, catalyzes the transfer of a ribosyl phosphate group from 5-phosphoribose 1-diphosphate to orotate, leading to the formation of orotidine monophosphate (OMP). This Kluyveromyces lactis (strain ATCC 8585 / CBS 2359 / DSM 70799 / NBRC 1267 / NRRL Y-1140 / WM37) (Yeast) protein is Orotate phosphoribosyltransferase (URA5).